The following is a 363-amino-acid chain: Spermidine/putrescine import ATP-binding protein PotA (363 aa).

Positions Leu4 to Ile234 constitute an ABC transporter domain. Position 36 to 43 (Gly36 to Thr43) interacts with ATP.

The protein belongs to the ABC transporter superfamily. Spermidine/putrescine importer (TC 3.A.1.11.1) family. As to quaternary structure, the complex is composed of two ATP-binding proteins (PotA), two transmembrane proteins (PotB and PotC) and a solute-binding protein (PotD).

It is found in the cell inner membrane. The enzyme catalyses ATP + H2O + polyamine-[polyamine-binding protein]Side 1 = ADP + phosphate + polyamineSide 2 + [polyamine-binding protein]Side 1.. Functionally, part of the ABC transporter complex PotABCD involved in spermidine/putrescine import. Responsible for energy coupling to the transport system. This Nitrosomonas eutropha (strain DSM 101675 / C91 / Nm57) protein is Spermidine/putrescine import ATP-binding protein PotA.